A 190-amino-acid polypeptide reads, in one-letter code: Ras-like GTP-binding protein RhoL (190 aa).

Residue 18–25 (GDGMVGKT) coordinates GTP. The Effector region signature appears at 40 to 48 (YIPTVFDNH). Residues 65-69 (DTAGQ) and 123-126 (TKLD) contribute to the GTP site. C187 bears the Cysteine methyl ester mark. The S-geranylgeranyl cysteine moiety is linked to residue C187. A propeptide spans 188–190 (KIL) (removed in mature form).

The protein belongs to the small GTPase superfamily. Rho family. In terms of tissue distribution, highly expressed in the embryonic cephalic mesoderm starting from stage 6 and fading by stage 11. Hemocyte precursor cells.

The protein localises to the cell membrane. Its function is as follows. Essential for the maturation of hemocytes. This is Ras-like GTP-binding protein RhoL (RhoL) from Drosophila melanogaster (Fruit fly).